The following is a 173-amino-acid chain: Large ribosomal subunit protein uL10 (173 aa).

Belongs to the universal ribosomal protein uL10 family. As to quaternary structure, part of the ribosomal stalk of the 50S ribosomal subunit. The N-terminus interacts with L11 and the large rRNA to form the base of the stalk. The C-terminus forms an elongated spine to which L12 dimers bind in a sequential fashion forming a multimeric L10(L12)X complex.

Forms part of the ribosomal stalk, playing a central role in the interaction of the ribosome with GTP-bound translation factors. This is Large ribosomal subunit protein uL10 from Geobacter sp. (strain M21).